Reading from the N-terminus, the 367-residue chain is 3-dehydroquinate synthase (367 aa).

Residues 69 to 74, 103 to 107, 127 to 128, Lys-140, Lys-149, and 167 to 170 contribute to the NAD(+) site; these read DGESHK, GVIGD, TT, and TLAT. Residues Glu-182, His-245, and His-262 each contribute to the Zn(2+) site.

The protein belongs to the sugar phosphate cyclases superfamily. Dehydroquinate synthase family. Requires Co(2+) as cofactor. The cofactor is Zn(2+). NAD(+) serves as cofactor.

Its subcellular location is the cytoplasm. The enzyme catalyses 7-phospho-2-dehydro-3-deoxy-D-arabino-heptonate = 3-dehydroquinate + phosphate. It functions in the pathway metabolic intermediate biosynthesis; chorismate biosynthesis; chorismate from D-erythrose 4-phosphate and phosphoenolpyruvate: step 2/7. In terms of biological role, catalyzes the conversion of 3-deoxy-D-arabino-heptulosonate 7-phosphate (DAHP) to dehydroquinate (DHQ). The sequence is that of 3-dehydroquinate synthase from Stutzerimonas stutzeri (strain A1501) (Pseudomonas stutzeri).